A 194-amino-acid polypeptide reads, in one-letter code: dCTP deaminase (194 aa).

Residues 110-115, Asp128, 136-138, Tyr171, Lys178, and Gln182 contribute to the dCTP site; these read RSSLAR and VLE. Catalysis depends on Glu138, which acts as the Proton donor/acceptor.

Belongs to the dCTP deaminase family. As to quaternary structure, homotrimer.

The enzyme catalyses dCTP + H2O + H(+) = dUTP + NH4(+). Its pathway is pyrimidine metabolism; dUMP biosynthesis; dUMP from dCTP (dUTP route): step 1/2. Catalyzes the deamination of dCTP to dUTP. The polypeptide is dCTP deaminase (Haemophilus ducreyi (strain 35000HP / ATCC 700724)).